Consider the following 84-residue polypeptide: Mitochondrial import inner membrane translocase subunit Tim9 (84 aa).

The Twin CX3C motif motif lies at 36–60 (CFQSCITNFRIRKLDDEEQLCVYKC). 2 cysteine pairs are disulfide-bonded: Cys-36-Cys-60 and Cys-40-Cys-56.

It belongs to the small Tim family. In terms of assembly, heterohexamer; composed of 3 copies of timm9 and 3 copies of timm10, named soluble 70 kDa complex. Associates directly with the TIM22 complex, whose core is composed of timm22. Interacts with the transmembrane regions of multi-pass transmembrane proteins in transit.

It localises to the mitochondrion inner membrane. In terms of biological role, component of the TIM22 complex, a complex that mediates the import and insertion of multi-pass transmembrane proteins into the mitochondrial inner membrane. The TIM22 complex forms a twin-pore translocase that uses the membrane potential as external driving force. In Dictyostelium discoideum (Social amoeba), this protein is Mitochondrial import inner membrane translocase subunit Tim9 (timm9).